The chain runs to 151 residues: Deoxyuridine 5'-triphosphate nucleotidohydrolase (151 aa).

Residues Arg70–Gly72, Asn83, Leu87–Asp89, and Met97 each bind substrate.

It belongs to the dUTPase family. Mg(2+) is required as a cofactor.

The catalysed reaction is dUTP + H2O = dUMP + diphosphate + H(+). It participates in pyrimidine metabolism; dUMP biosynthesis; dUMP from dCTP (dUTP route): step 2/2. Functionally, this enzyme is involved in nucleotide metabolism: it produces dUMP, the immediate precursor of thymidine nucleotides and it decreases the intracellular concentration of dUTP so that uracil cannot be incorporated into DNA. The sequence is that of Deoxyuridine 5'-triphosphate nucleotidohydrolase from Pseudomonas syringae pv. tomato (strain ATCC BAA-871 / DC3000).